Consider the following 939-residue polypeptide: Protein translocase subunit SecA 1 (939 aa).

ATP contacts are provided by residues Q85, 103 to 107, and D504; that span reads GEGKT. A disordered region spans residues 848-939; that stretch reads EVPVEDEKPS…QSKGGRRRKK (92 aa). 3 stretches are compositionally biased toward basic and acidic residues: residues 852–863, 872–889, and 914–925; these read EDEKPSLEKEDA, PEIR…DRLH, and PVRSEADGLTRA. Residues 926–939 show a composition bias toward basic residues; sequence ERRKQSKGGRRRKK.

This sequence belongs to the SecA family. As to quaternary structure, monomer and homodimer. Part of the essential Sec protein translocation apparatus which comprises SecA, SecYEG and auxiliary proteins SecDF. Other proteins may also be involved.

The protein localises to the cell membrane. Its subcellular location is the cytoplasm. It catalyses the reaction ATP + H2O + cellular proteinSide 1 = ADP + phosphate + cellular proteinSide 2.. In terms of biological role, part of the Sec protein translocase complex. Interacts with the SecYEG preprotein conducting channel. Has a central role in coupling the hydrolysis of ATP to the transfer of proteins into and across the cell membrane, serving as an ATP-driven molecular motor driving the stepwise translocation of polypeptide chains across the membrane. This chain is Protein translocase subunit SecA 1, found in Streptomyces avermitilis (strain ATCC 31267 / DSM 46492 / JCM 5070 / NBRC 14893 / NCIMB 12804 / NRRL 8165 / MA-4680).